The primary structure comprises 244 residues: Trypsin (244 aa).

Residues 1 to 15 (MKFLVILVLLGAAVA) form the signal peptide. Residues 16–21 (FEDDDK) constitute a propeptide, activation peptide. The 221-residue stretch at 22–242 (IVGGFTCAKN…FVTWIQSTIS (221 aa)) folds into the Peptidase S1 domain. Disulfide bonds link C28-C158, C46-C62, C130-C231, C137-C204, C169-C183, and C194-C218. H61 serves as the catalytic Charge relay system. Residues E73, N75, and E83 each coordinate Ca(2+). Catalysis depends on D105, which acts as the Charge relay system. The active-site Charge relay system is the S198.

It belongs to the peptidase S1 family. Requires Ca(2+) as cofactor.

It localises to the secreted. It is found in the extracellular space. The catalysed reaction is Preferential cleavage: Arg-|-Xaa, Lys-|-Xaa.. This Xenopus laevis (African clawed frog) protein is Trypsin.